The primary structure comprises 276 residues: NH(3)-dependent NAD(+) synthetase (276 aa).

43–50 (GISGGVDS) contributes to the ATP binding site. D49 contacts Mg(2+). R146 is a deamido-NAD(+) binding site. ATP is bound at residue T166. E171 serves as a coordination point for Mg(2+). Residues K179 and D186 each coordinate deamido-NAD(+). K195 and T217 together coordinate ATP. 266–267 (HK) lines the deamido-NAD(+) pocket.

It belongs to the NAD synthetase family. In terms of assembly, homodimer.

It catalyses the reaction deamido-NAD(+) + NH4(+) + ATP = AMP + diphosphate + NAD(+) + H(+). It participates in cofactor biosynthesis; NAD(+) biosynthesis; NAD(+) from deamido-NAD(+) (ammonia route): step 1/1. In terms of biological role, catalyzes the ATP-dependent amidation of deamido-NAD to form NAD. Uses ammonia as a nitrogen source. The sequence is that of NH(3)-dependent NAD(+) synthetase from Shewanella halifaxensis (strain HAW-EB4).